Here is a 345-residue protein sequence, read N- to C-terminus: MAARPLVTVYDEKYEATQSQIRLPAVFRTPIRPDLVSFIADQVRRNRRQAHAVNTKAGKQHSAESWGTGRAVARIPRVRGGGTHRSGQGAFGNMCRGGHMFAPLKVFRRWHRNVNIAQKRYAVSSAIAASGIPALLQARGHVIDQVAEVPLVVSDKVESFRKTKEAVVFLRRSHLWADIEKVYNSKRNRAGKGKLRNRQHKQKLGPVVIYGQDAECARAFRNIPGVDVMNVERLNLLKLAPGGHLGRLIIWTESAFKKLDTIYGTTVANSSQLKKGWSVPLPIMANSDFSRIIRSEEVVKAIRAPKKNPVLPKVHRNPLKKRTLLYKLNPYASILRKASKANVKK.

Ala-2 carries the N-acetylalanine modification.

Belongs to the universal ribosomal protein uL4 family.

This Caenorhabditis elegans protein is Large ribosomal subunit protein uL4 (rpl-4).